A 357-amino-acid polypeptide reads, in one-letter code: UDP-N-acetylglucosamine--N-acetylmuramyl-(pentapeptide) pyrophosphoryl-undecaprenol N-acetylglucosamine transferase (357 aa).

Residues 14-16 (TGG), Asn128, Arg169, Ser193, Ile248, and Gln292 contribute to the UDP-N-acetyl-alpha-D-glucosamine site.

It belongs to the glycosyltransferase 28 family. MurG subfamily.

The protein resides in the cell inner membrane. The catalysed reaction is di-trans,octa-cis-undecaprenyl diphospho-N-acetyl-alpha-D-muramoyl-L-alanyl-D-glutamyl-meso-2,6-diaminopimeloyl-D-alanyl-D-alanine + UDP-N-acetyl-alpha-D-glucosamine = di-trans,octa-cis-undecaprenyl diphospho-[N-acetyl-alpha-D-glucosaminyl-(1-&gt;4)]-N-acetyl-alpha-D-muramoyl-L-alanyl-D-glutamyl-meso-2,6-diaminopimeloyl-D-alanyl-D-alanine + UDP + H(+). It participates in cell wall biogenesis; peptidoglycan biosynthesis. Its function is as follows. Cell wall formation. Catalyzes the transfer of a GlcNAc subunit on undecaprenyl-pyrophosphoryl-MurNAc-pentapeptide (lipid intermediate I) to form undecaprenyl-pyrophosphoryl-MurNAc-(pentapeptide)GlcNAc (lipid intermediate II). The sequence is that of UDP-N-acetylglucosamine--N-acetylmuramyl-(pentapeptide) pyrophosphoryl-undecaprenol N-acetylglucosamine transferase from Bdellovibrio bacteriovorus (strain ATCC 15356 / DSM 50701 / NCIMB 9529 / HD100).